A 174-amino-acid chain; its full sequence is CEN-like protein 1 (174 aa).

The protein belongs to the phosphatidylethanolamine-binding protein family. Expressed in vegetative axillary meristems but not in the main shoot meristem.

It localises to the cytoplasm. Functionally, may form complexes with phosphorylated ligands by interfering with kinases and their effectors. This Nicotiana tabacum (Common tobacco) protein is CEN-like protein 1 (CET1).